Reading from the N-terminus, the 385-residue chain is UPF0284 protein PMM0439 (385 aa).

This sequence belongs to the UPF0284 family.

This chain is UPF0284 protein PMM0439, found in Prochlorococcus marinus subsp. pastoris (strain CCMP1986 / NIES-2087 / MED4).